Here is a 365-residue protein sequence, read N- to C-terminus: Aminomethyltransferase (365 aa).

It belongs to the GcvT family. The glycine cleavage system is composed of four proteins: P, T, L and H.

It carries out the reaction N(6)-[(R)-S(8)-aminomethyldihydrolipoyl]-L-lysyl-[protein] + (6S)-5,6,7,8-tetrahydrofolate = N(6)-[(R)-dihydrolipoyl]-L-lysyl-[protein] + (6R)-5,10-methylene-5,6,7,8-tetrahydrofolate + NH4(+). Functionally, the glycine cleavage system catalyzes the degradation of glycine. This is Aminomethyltransferase from Chlorobium phaeovibrioides (strain DSM 265 / 1930) (Prosthecochloris vibrioformis (strain DSM 265)).